A 753-amino-acid polypeptide reads, in one-letter code: Metal regulatory transcription factor 1 (753 aa).

G2 carries the N-acetylglycine modification. S5 carries the post-translational modification Phosphoserine. Residues 133–138 (KRKEVK) carry the Nuclear localization signal motif. C2H2-type zinc fingers lie at residues 140–164 (YQCT…QKTH), 170–194 (FVCN…VRVH), 200–224 (FECD…QRLH), 229–253 (FNCE…IRTH), 259–283 (FRCD…VRTH), and 289–313 (FFCP…MKGH). Phosphoserine is present on S305. 3 disordered regions span residues 308–328 (SHMK…QHNG), 395–466 (ESFN…ALLQ), and 648–715 (SRRK…LSAM). Positions 408–417 (PPSTGNSASL) are enriched in polar residues. Residues 655-666 (SPPPPEPSPQAP) show a composition bias toward pro residues. Over residues 679-698 (SSAPVPGSSSSTLPSSCEQS) the composition is skewed to low complexity. The span at 700-712 (QAETPSDPQTETL) shows a compositional bias: polar residues.

Its subcellular location is the nucleus. The protein localises to the cytoplasm. Its function is as follows. Zinc-dependent transcriptional regulator of cellular adaption to conditions of exposure to heavy metals. Binds to metal responsive elements (MRE) in promoters and activates the transcription of metallothionein genes like metallothionein-2/MT2A. Also regulates the expression of metalloproteases in response to intracellular zinc and functions as a catabolic regulator of cartilages. The protein is Metal regulatory transcription factor 1 (MTF1) of Homo sapiens (Human).